The sequence spans 94 residues: Large ribosomal subunit protein bL27 (94 aa).

Residues 1 to 9 (MTLNNLQLF) constitute a propeptide that is removed on maturation. The interval 9 to 33 (FAHKKGGGSTSNGRDSQAKRLGAKA) is disordered.

This sequence belongs to the bacterial ribosomal protein bL27 family. Post-translationally, the N-terminus is cleaved by ribosomal processing cysteine protease Prp.

This chain is Large ribosomal subunit protein bL27, found in Streptococcus pneumoniae serotype 4 (strain ATCC BAA-334 / TIGR4).